The chain runs to 175 residues: Bifunctional protein PyrR (175 aa).

Substrate is bound by residues 40-41 (TR), R85, 102-110 (DDVLYTGRT), R135, and V159. The PRPP-binding signature appears at 98–110 (VIIIDDVLYTGRT).

It belongs to the purine/pyrimidine phosphoribosyltransferase family. PyrR subfamily. Homodimer and homohexamer; in equilibrium.

The catalysed reaction is UMP + diphosphate = 5-phospho-alpha-D-ribose 1-diphosphate + uracil. Functionally, regulates transcriptional attenuation of the pyrimidine nucleotide (pyr) operon by binding in a uridine-dependent manner to specific sites on pyr mRNA. This disrupts an antiterminator hairpin in the RNA and favors formation of a downstream transcription terminator, leading to a reduced expression of downstream genes. Its function is as follows. Also displays a weak uracil phosphoribosyltransferase activity which is not physiologically significant. This is Bifunctional protein PyrR from Staphylococcus saprophyticus subsp. saprophyticus (strain ATCC 15305 / DSM 20229 / NCIMB 8711 / NCTC 7292 / S-41).